The following is a 503-amino-acid chain: Probable cytosol aminopeptidase (503 aa).

Residues lysine 271 and aspartate 276 each coordinate Mn(2+). Lysine 283 is an active-site residue. The Mn(2+) site is built by aspartate 294, aspartate 353, and glutamate 355. Arginine 357 is an active-site residue.

It belongs to the peptidase M17 family. Requires Mn(2+) as cofactor.

It localises to the cytoplasm. The catalysed reaction is Release of an N-terminal amino acid, Xaa-|-Yaa-, in which Xaa is preferably Leu, but may be other amino acids including Pro although not Arg or Lys, and Yaa may be Pro. Amino acid amides and methyl esters are also readily hydrolyzed, but rates on arylamides are exceedingly low.. The enzyme catalyses Release of an N-terminal amino acid, preferentially leucine, but not glutamic or aspartic acids.. Its function is as follows. Presumably involved in the processing and regular turnover of intracellular proteins. Catalyzes the removal of unsubstituted N-terminal amino acids from various peptides. This chain is Probable cytosol aminopeptidase, found in Chlorobaculum parvum (strain DSM 263 / NCIMB 8327) (Chlorobium vibrioforme subsp. thiosulfatophilum).